The primary structure comprises 226 residues: Ribonuclease HII (226 aa).

In terms of domain architecture, RNase H type-2 spans 24 to 216; that stretch reads QRLCGVDEAG…VRKVLERGMV (193 aa). A divalent metal cation contacts are provided by Asp-30, Glu-31, and Asp-125.

It belongs to the RNase HII family. It depends on Mn(2+) as a cofactor. Mg(2+) is required as a cofactor.

The protein resides in the cytoplasm. The enzyme catalyses Endonucleolytic cleavage to 5'-phosphomonoester.. Functionally, endonuclease that specifically degrades the RNA of RNA-DNA hybrids. The polypeptide is Ribonuclease HII (Cupriavidus metallidurans (strain ATCC 43123 / DSM 2839 / NBRC 102507 / CH34) (Ralstonia metallidurans)).